The primary structure comprises 134 residues: uncharacterized protein (134 aa).

This is an uncharacterized protein from Bacillus subtilis (strain 168).